A 150-amino-acid chain; its full sequence is Large ribosomal subunit protein bL9 (150 aa).

The protein belongs to the bacterial ribosomal protein bL9 family.

Binds to the 23S rRNA. The sequence is that of Large ribosomal subunit protein bL9 from Streptococcus pyogenes serotype M2 (strain MGAS10270).